The chain runs to 215 residues: Urease accessory protein UreG 2 (215 aa).

A GTP-binding site is contributed by 11 to 18 (GPVGSGKT).

This sequence belongs to the SIMIBI class G3E GTPase family. UreG subfamily. Homodimer. UreD, UreF and UreG form a complex that acts as a GTP-hydrolysis-dependent molecular chaperone, activating the urease apoprotein by helping to assemble the nickel containing metallocenter of UreC. The UreE protein probably delivers the nickel.

It localises to the cytoplasm. Its function is as follows. Facilitates the functional incorporation of the urease nickel metallocenter. This process requires GTP hydrolysis, probably effectuated by UreG. The protein is Urease accessory protein UreG 2 of Methylorubrum populi (strain ATCC BAA-705 / NCIMB 13946 / BJ001) (Methylobacterium populi).